The following is a 484-amino-acid chain: Protein DETOXIFICATION 33 (484 aa).

Residues 1–16 are compositionally biased toward basic and acidic residues; that stretch reads MGKDKTLPLLDPREPP. Residues 1–22 form a disordered region; that stretch reads MGKDKTLPLLDPREPPELTGTK. A run of 12 helical transmembrane segments spans residues 39 to 59, 81 to 101, 122 to 142, 155 to 175, 190 to 210, 218 to 238, 267 to 287, 294 to 314, 338 to 358, 380 to 400, 409 to 429, and 439 to 459; these read LWEL…LGAL, VISG…ETLC, VILF…PPIL, AGKF…NFPI, WISG…ILYF, AITL…YILI, ALML…TGLL, VDAI…SIGF, VIVV…VVLA, IAVL…LSGV, LVAY…GLVL, and GIWG…IGII.

The protein belongs to the multi antimicrobial extrusion (MATE) (TC 2.A.66.1) family.

It localises to the membrane. This chain is Protein DETOXIFICATION 33, found in Arabidopsis thaliana (Mouse-ear cress).